Consider the following 668-residue polypeptide: MPMDEGDAQGSLLLEWKQLNYYVPAQEQSNYSFWNECRKQRELGILHDVSGHLKTGDLIAILGGSGAGKTTLLAAISQRLRGNLTGDVVLNGMAMERDQMTRISSFLREFEINVKTFTAYDDLYFMSHFKMHRRTTKSEKRQAVSDLLLAVGLRDAAHTRIQQLSGGERKRLSLAEELITDPIFLFCDEPTTGLDSFSAYTVIKTLRHLCTRRRIAKHSLTQVYGEDSFATPSDNGSSGSNSIEMEIVDNSHESLLQAMKELPTLGVLNNSPNGTQKKAAICSIHQPTSDIFELFTHIILMDGGRIVYQGRTEQAAKFFTEGFMQPKNCNPADFYLKTLADGQGSKNAGELLRAKYEHETDGLYSGSWLLARNYSGDYMKHVQNFKKIRWIYQVYLLVIRFMTEDLANIRSGLIGFGFFMTTAVTLSLMYSGVGGLTQRTVQDVGGSIFMLSNEMIFTFSYGVTYIFPAALPIIRREVAEGTYSLSAYYVALVLSFVPVAFFKGYMFLSVIYASIYYTRGFLLYITMGFLMSLSAIAAVGYGVFLSSLFETDKMASECAAPFDLIFLIFGGTYMNVDSVPLLKYFSLFFYSNEALMYNFWIDIDNIACXVNDEHPCCQTGLEVLQQASFRTADYTFWLDCASLLVVALVFHIVSFTLIRRYINRSGYY.

Topologically, residues 1 to 412 (MPMDEGDAQG…TEDLANIRSG (412 aa)) are cytoplasmic. Positions 31-328 (YSFWNECRKQ…FTEGFMQPKN (298 aa)) constitute an ABC transporter domain. 63 to 70 (GGSGAGKT) contacts ATP. A helical transmembrane segment spans residues 413–433 (LIGFGFFMTTAVTLSLMYSGV). Residues 434–453 (GGLTQRTVQDVGGSIFMLSN) lie on the Extracellular side of the membrane. The helical transmembrane segment at 454–474 (EMIFTFSYGVTYIFPAALPII) threads the bilayer. Residues 475-490 (RREVAEGTYSLSAYYV) are Cytoplasmic-facing. Residues 491–511 (ALVLSFVPVAFFKGYMFLSVI) traverse the membrane as a helical segment. The Extracellular segment spans residues 512 to 524 (YASIYYTRGFLLY). Residues 525–545 (ITMGFLMSLSAIAAVGYGVFL) traverse the membrane as a helical segment. The Cytoplasmic portion of the chain corresponds to 546 to 561 (SSLFETDKMASECAAP). Residues 562–582 (FDLIFLIFGGTYMNVDSVPLL) form a helical membrane-spanning segment. Topologically, residues 583-637 (KYFSLFFYSNEALMYNFWIDIDNIACXVNDEHPCCQTGLEVLQQASFRTADYTFW) are extracellular. Residues 638–658 (LDCASLLVVALVFHIVSFTLI) traverse the membrane as a helical segment. Topologically, residues 659–668 (RRYINRSGYY) are cytoplasmic.

The protein belongs to the ABC transporter superfamily. ABCG family. Eye pigment precursor importer (TC 3.A.1.204) subfamily. May form a heterodimer with w/white. In terms of tissue distribution, expressed in eyes.

The protein localises to the membrane. It carries out the reaction guanine(out) + ATP + H2O = guanine(in) + ADP + phosphate + H(+). The catalysed reaction is riboflavin(in) + ATP + H2O = riboflavin(out) + ADP + phosphate + H(+). The enzyme catalyses (6S)-5,6,7,8-tetrahydrofolate(out) + ATP + H2O = (6S)-5,6,7,8-tetrahydrofolate(in) + ADP + phosphate + H(+). ATP-dependent transporter of the ATP-binding cassette (ABC) family which transports various molecules including bioamines, neurotransmitters and metabolic intermediates. In the eye and probably in association with w/white, required for the transport of the eye red pigment precursor, guanine, into pigment cell granules. In Malpighian tubules, involved in guanine uptake. Probably in association with w/white, involved in aging-induced intestinal stem cell proliferation in the midgut by regulating tetrahydrofolate transport. The sequence is that of Protein brown from Drosophila virilis (Fruit fly).